The sequence spans 415 residues: Gamma-glutamyl phosphate reductase (415 aa).

This sequence belongs to the gamma-glutamyl phosphate reductase family.

The protein localises to the cytoplasm. The enzyme catalyses L-glutamate 5-semialdehyde + phosphate + NADP(+) = L-glutamyl 5-phosphate + NADPH + H(+). It participates in amino-acid biosynthesis; L-proline biosynthesis; L-glutamate 5-semialdehyde from L-glutamate: step 2/2. Its function is as follows. Catalyzes the NADPH-dependent reduction of L-glutamate 5-phosphate into L-glutamate 5-semialdehyde and phosphate. The product spontaneously undergoes cyclization to form 1-pyrroline-5-carboxylate. The protein is Gamma-glutamyl phosphate reductase of Bacillus cereus (strain B4264).